The chain runs to 186 residues: Casparian strip membrane protein 6 (186 aa).

The Cytoplasmic segment spans residues 1 to 23; that stretch reads MKAGPIELGEGKSSAPKAAVNRG. Residues 24-44 traverse the membrane as a helical segment; that stretch reads VAILDFILRILAFIGTLGSAI. At 45–73 the chain is on the extracellular side; the sequence is SMATTNETLPFFTQFIRFRAEYDDLPTFT. Asparagine 50 carries an N-linked (GlcNAc...) asparagine glycan. Residues 74–94 form a helical membrane-spanning segment; the sequence is FFVVANGVVSAYLLFSLPFSI. At 95 to 106 the chain is on the cytoplasmic side; that stretch reads FNIVRSKAQNSR. Residues 107–127 traverse the membrane as a helical segment; sequence ILLIILDTAMLGLLSAGASAA. Over 128–160 the chain is Extracellular; sequence AAIVYLAHQGNVRTNWSAICQQFNSFCERISGS. Asparagine 142 is a glycosylation site (N-linked (GlcNAc...) asparagine). A helical membrane pass occupies residues 161–181; the sequence is LIGSFIGVVVFILLISLSAVA. At 182–186 the chain is on the cytoplasmic side; the sequence is LSRHK.

It belongs to the Casparian strip membrane proteins (CASP) family. In terms of assembly, homodimer and heterodimers.

It localises to the cell membrane. Functionally, regulates membrane-cell wall junctions and localized cell wall deposition. Required for establishment of the Casparian strip membrane domain (CSD) and the subsequent formation of Casparian strips, a cell wall modification of the root endodermis that determines an apoplastic barrier between the intraorganismal apoplasm and the extraorganismal apoplasm and prevents lateral diffusion. The sequence is that of Casparian strip membrane protein 6 from Populus trichocarpa (Western balsam poplar).